Reading from the N-terminus, the 601-residue chain is Somatic embryogenesis receptor kinase 5 (601 aa).

An N-terminal signal peptide occupies residues 1–24 (MEHGSSRGFIWLILFLDFVSRVTG). Over 25-215 (KTQVDALIAL…SPSPSPSGTS (191 aa)) the chain is Extracellular. N-linked (GlcNAc...) asparagine glycans are attached at residues N52, N81, N105, N129, N151, and N184. LRR repeat units follow at residues 71–94 (SVTR…AQLP), 95–118 (NLQY…GDLM), 119–141 (ELVS…LGKL), 143–165 (KLRF…LTAL), and 166–188 (PLDV…GSFS). The helical transmembrane segment at 216–236 (AAIVVGVAAGAALLFALAWWL) threads the bilayer. At 237-601 (RRKLQGHFLD…IENDYPSGPR (365 aa)) the chain is on the cytoplasmic side. Residue T272 is modified to Phosphothreonine. One can recognise a Protein kinase domain in the interval 275–572 (FSKRNVLGKG…KEEMPIHDFN (298 aa)). ATP is bound at residue 281-289 (LGKGRFGIL). At T298 the chain carries Phosphothreonine. An ATP-binding site is contributed by K303. A phosphoserine mark is found at S356 and S359. D402 serves as the catalytic Proton acceptor. Residues T435, T436, and T441 each carry the phosphothreonine modification. Phosphotyrosine is present on Y449. S451 is subject to Phosphoserine. At T452 the chain carries Phosphothreonine. S456 and S506 each carry phosphoserine. Residue T532 is modified to Phosphothreonine.

This sequence belongs to the protein kinase superfamily. Ser/Thr protein kinase family. In terms of assembly, interacts with TMK4/BARK1. In terms of processing, autophosphorylated.

The protein localises to the cell membrane. It catalyses the reaction L-seryl-[protein] + ATP = O-phospho-L-seryl-[protein] + ADP + H(+). The enzyme catalyses L-threonyl-[protein] + ATP = O-phospho-L-threonyl-[protein] + ADP + H(+). Its function is as follows. Serine/threonine-kinase of unknown function. This is Somatic embryogenesis receptor kinase 5 (SERK5) from Arabidopsis thaliana (Mouse-ear cress).